A 414-amino-acid polypeptide reads, in one-letter code: Ribulose bisphosphate carboxylase large chain (414 aa).

Residues Asn102 and Thr152 each contribute to the substrate site. The Proton acceptor role is filled by Lys154. Lys156 contributes to the substrate binding site. Mg(2+) contacts are provided by Lys180, Asp182, and Glu183. Lys180 is modified (N6-carboxylysine). His273 functions as the Proton acceptor in the catalytic mechanism. Arg274, His306, and Ser358 together coordinate substrate.

This sequence belongs to the RuBisCO large chain family. Type I subfamily. As to quaternary structure, heterohexadecamer of 8 large chains and 8 small chains; disulfide-linked. The disulfide link is formed within the large subunit homodimers. Mg(2+) serves as cofactor. Post-translationally, the disulfide bond which can form in the large chain dimeric partners within the hexadecamer appears to be associated with oxidative stress and protein turnover.

The protein localises to the plastid. It is found in the chloroplast. It catalyses the reaction 2 (2R)-3-phosphoglycerate + 2 H(+) = D-ribulose 1,5-bisphosphate + CO2 + H2O. The enzyme catalyses D-ribulose 1,5-bisphosphate + O2 = 2-phosphoglycolate + (2R)-3-phosphoglycerate + 2 H(+). RuBisCO catalyzes two reactions: the carboxylation of D-ribulose 1,5-bisphosphate, the primary event in carbon dioxide fixation, as well as the oxidative fragmentation of the pentose substrate in the photorespiration process. Both reactions occur simultaneously and in competition at the same active site. The sequence is that of Ribulose bisphosphate carboxylase large chain (rbcL) from Antrophyum reticulatum (Ox-tongue fern).